We begin with the raw amino-acid sequence, 385 residues long: Cytochrome b (385 aa).

The next 4 membrane-spanning stretches (helical) occupy residues 32 to 52 (MGSL…FMAM), 76 to 98 (WLLR…MHMA), 113 to 133 (VWII…LGYC), and 179 to 199 (FFAL…MHFM). Residues His82 and His96 each contribute to the heme b site. Residues His183 and His197 each coordinate heme b. Residue His202 participates in a ubiquinone binding. 4 consecutive transmembrane segments (helical) span residues 225 to 245 (FIFK…LFVF), 289 to 309 (LLGV…PLTD), 321 to 341 (ISKL…VLGS), and 348 to 368 (FVQM…IFVP).

It belongs to the cytochrome b family. Fungal cytochrome b-c1 complex contains 10 subunits; 3 respiratory subunits, 2 core proteins and 5 low-molecular weight proteins. Cytochrome b-c1 complex is a homodimer. Requires heme b as cofactor.

It is found in the mitochondrion inner membrane. Functionally, component of the ubiquinol-cytochrome c reductase complex (complex III or cytochrome b-c1 complex) that is part of the mitochondrial respiratory chain. The b-c1 complex mediates electron transfer from ubiquinol to cytochrome c. Contributes to the generation of a proton gradient across the mitochondrial membrane that is then used for ATP synthesis. The polypeptide is Cytochrome b (COB) (Monosporozyma servazzii (Yeast)).